A 1227-amino-acid polypeptide reads, in one-letter code: MAVKYTPDQARAIESRGQDLLVSASAGSGKTSVLVERVIREIMDDHLEVNQLLVITFTRAAASEMKQRIKQRLQDRLQEETDASQADFLRRQLAEIDTAIISTIDSFCLDVIRRFYFAIDIDPDFSILTDATQIELLKERALRDVENGYLQNEDQAKKDRFLALYDAFAGDSNANSARDLLLDLYQFAMARPNYRAWLQKLAAPYQLETSDVVDSALWQEKIKPYLEEEFSNLADKLTALMAEADFDHEKFAKYQPAFTAFATSLASYRESLATDDPFDRQRELLAACQFDGTLRTNKEIADFVEEAKEVKEAGKQLVFNVYTGFYASSNADQQALLAKGAEIASAAAEVELAFIDRFNELKRADRVLDFSDMEQLAYEILTQDSSNSDLARAYYQSRFKEIMVDEYQDTNALQDGLIQRLKKAGKNNLFMVGDVKQSIYGFRQAEPSLFIAKYDEYGQENSAGKQRIIFAENFRSSQPVTQAVNLIFDSLLTKDFGGIDYQKEGQLKFAAGYDPEAALPTETEVLYQEDSSATDDDGELNQGDLAMVISRIQKLIADQTPIFDPKTGQTRPVSYGDIAILTRSKTSNLDIKQEFDRYGVPLFVMDVQNYFQTFELTVIMSYLKIIDNPDQDIPLVAVLRSPIFNFSSSDLAEIRLVNKSVSFYAALRTYAKKDTDLAARCRDFLAQLQDLRDFSLSHRISELLWTIYERTSFLEIVTAMTNGQQRRLNLTALYERASAYESSGFKDLYQFINFIARMRKNQKDLAQPILSENAGNSVKLMTIHASKGLEFPVVFVLGLEHRYNYQQDITGSYVLDASGLGLSFAYPFDEAEYRADTLANVWLKIAKKQKLLEEEARLLYVALTRAKQKLILAANIKLPARTDLAGLEEKWAKEISAGRLTLLDKMKVAKPLDFLAPALARAKQVKRLGEKAVSDLATGQEGSLVFVHFDPKKDQAQLPDSEAVAASGADLTEDEAAVFKQAEKLYTFSQGGYPYLDASRTTAYQAVSEIKKVFGDPIEDELADSHISELQSANRYLQPIDTEPDFLFQNTVSSAELGTASHLVLQYYDYAKGDKNAIDSCIAGLVEKGRLSQTLASMLDREALSWFVKSDFAKDFYQQPDRLHREENFATILSPKTLFKDFSDFPGKILVHGTIDGYYEAENGIILFDYKTDHVNPRKQEEAIQKLKEKYQGQLRLYERALNESGRLPVLKKYLVLLSCREIVEVD.

In terms of domain architecture, UvrD-like helicase ATP-binding spans 3–477; the sequence is VKYTPDQARA…IIFAENFRSS (475 aa). 24 to 31 is a binding site for ATP; sequence ASAGSGKT. Residues 505 to 788 enclose the UvrD-like helicase C-terminal domain; it reads GQLKFAAGYD…KLMTIHASKG (284 aa).

It belongs to the helicase family. AddA subfamily. As to quaternary structure, heterodimer of AddA and AddB/RexB. Mg(2+) is required as a cofactor.

It carries out the reaction Couples ATP hydrolysis with the unwinding of duplex DNA by translocating in the 3'-5' direction.. The catalysed reaction is ATP + H2O = ADP + phosphate + H(+). Its function is as follows. The heterodimer acts as both an ATP-dependent DNA helicase and an ATP-dependent, dual-direction single-stranded exonuclease. Recognizes the chi site generating a DNA molecule suitable for the initiation of homologous recombination. The AddA nuclease domain is required for chi fragment generation; this subunit has the helicase and 3' -&gt; 5' nuclease activities. The chain is ATP-dependent helicase/nuclease subunit A from Lactobacillus delbrueckii subsp. bulgaricus (strain ATCC 11842 / DSM 20081 / BCRC 10696 / JCM 1002 / NBRC 13953 / NCIMB 11778 / NCTC 12712 / WDCM 00102 / Lb 14).